The chain runs to 235 residues: Transmembrane emp24 domain-containing protein 9 (235 aa).

Positions 1-37 are cleaved as a signal peptide; that stretch reads MAAERSLWVVGLCPGSRLGRVVRVLLLLLWFAARGGA. The Lumenal portion of the chain corresponds to 38-201; sequence LYFHIGETEK…FRQTSESTNQ (164 aa). Residues 47–145 form the GOLD domain; that stretch reads KKCFIEEIPD…MLRVHLDIQV (99 aa). The segment at 121 to 160 is required for interaction with STX17; sequence CLHSNSTKFSLFAGGMLRVHLDIQVGEHANDYAEIAAKDK. N-linked (GlcNAc...) asparagine glycosylation occurs at Asn-125. Residues 154 to 184 adopt a coiled-coil conformation; it reads EIAAKDKLSELQLRVRQLVEQVEQIQKEQNY. Lys-160 carries the N6-acetyllysine modification. Residues 202–222 form a helical membrane-spanning segment; it reads RVLWWSILQTLILVAIGVWQM. Topologically, residues 223–235 are cytoplasmic; it reads RHLKSFFEAKKLV. The COPII vesicle coat-binding motif lies at 228–229; that stretch reads FF. Residues 228-235 carry the COPI vesicle coat-binding motif; sequence FFEAKKLV.

This sequence belongs to the EMP24/GP25L family. In terms of assembly, monomer and homodimer in endoplasmic reticulum. Predominantly monomeric and to lesser extent homodimeric in endoplasmic reticulum-Golgi intermediate compartment and cis-Golgi network. Probably oligomerizes with other members of the EMP24/GP25L family such as TMED2, TMED7 and TMED10. Interacts with TMED5. Interacts (via C-terminus) with COPG1; the interaction involves dimeric TMED9. Interacts with PTPN2 and SPAST. Interacts with STX17; the interaction is direct. Post-translationally, N-linked glycosylated containing high mannose.

It is found in the endoplasmic reticulum membrane. The protein localises to the golgi apparatus. The protein resides in the cis-Golgi network membrane. Its subcellular location is the endoplasmic reticulum-Golgi intermediate compartment membrane. It localises to the trans-Golgi network membrane. Functionally, appears to be involved in vesicular protein trafficking, mainly in the early secretory pathway. In COPI vesicle-mediated retrograde transport involved in the coatomer recruitment to membranes of the early secretory pathway. Increases coatomer-dependent activity of ARFGAP2. Thought to play a crucial role in the specific retention of p24 complexes in cis-Golgi membranes; specifically contributes to the coupled localization of TMED2 and TMED10 in the cis-Golgi network. May be involved in organization of intracellular membranes, such as of the ER-Golgi intermediate compartment and the Golgi apparatus. Involved in ER localization of PTPN2. This chain is Transmembrane emp24 domain-containing protein 9 (TMED9), found in Bos taurus (Bovine).